We begin with the raw amino-acid sequence, 138 residues long: uncharacterized protein (138 aa).

2 helical membrane passes run 1-21 and 46-66; these read MEIG…EAIV and YAFI…HKFV.

It localises to the cell membrane. This is an uncharacterized protein from Methanocaldococcus jannaschii (strain ATCC 43067 / DSM 2661 / JAL-1 / JCM 10045 / NBRC 100440) (Methanococcus jannaschii).